Reading from the N-terminus, the 558-residue chain is MHTSDISMTQDQDVSTCRLCHHNTDPNSLNIFDDTVQFCKDVSIAEVSKSLWSVQYDRNECLSELICSRCLEILEEAFELRKGMQEREQSLQEQLKEMIKDHPKHRPGLNGNPGVFVPEEGCIIVEVDPENLAESSEEEFALGSDGEYENYDDDDEEEEEDYDEEDEEDGQNGEDVDMPLGMDAAQMAAQQSVANNANTTEARPKRAFLCQYCDLGFTLPAECQEHELAAHDPNAPYCCNFCNIKLVTRPALISHIKTLHDPDRPYVCAHCRKGFVRRSDLKKHTIVHTGVRPFTCNVCSKSFSRNTNLTKHMRIHSGVKPFVCQQCPRSFQTAVEMMRHTRSHGEVKAFQCGRCPYSFSRRDKLIAHQQVHTRRDMEQQQQMGLIPPMEGDLQQQALQAKQKAAAQTKNSRYYHCDVCDRTFQRERDLQRHQALHMDSLFACKTCNQGFNRREQLQRHELEAHGPSFTCGICCISFLHQIELENHLKVHQLQHKMAQRAQEAAILPLKMAEKAPVAMTAPLVQDPQLVRPSAAELSFYSNMIPTMNLGFYSETRPEE.

The 80-residue stretch at 15–94 folds into the ZAD domain; sequence STCRLCHHNT…QEREQSLQEQ (80 aa). Zn(2+)-binding residues include Cys17, Cys20, Cys67, and Cys70. Over residues 132-177 the composition is skewed to acidic residues; sequence LAESSEEEFALGSDGEYENYDDDDEEEEEDYDEEDEEDGQNGEDVD. The segment at 132-178 is disordered; sequence LAESSEEEFALGSDGEYENYDDDDEEEEEDYDEEDEEDGQNGEDVDM. 9 consecutive C2H2-type zinc fingers follow at residues 208–231, 237–260, 266–288, 294–316, 322–344, 350–372, 414–436, 441–464, and 468–490; these read FLCQYCDLGFTLPAECQEHELAAH, YCCNFCNIKLVTRPALISHIKTLH, YVCAHCRKGFVRRSDLKKHTIVH, FTCNVCSKSFSRNTNLTKHMRIH, FVCQQCPRSFQTAVEMMRHTRSH, FQCGRCPYSFSRRDKLIAHQQVH, YHCDVCDRTFQRERDLQRHQALH, FACKTCNQGFNRREQLQRHELEAH, and FTCGICCISFLHQIELENHLKVH.

Its function is as follows. May be involved in transcriptional regulation. The function of this protein is unclear. According to one report, it is required for development and viability since mutants display defects in several developmental morphogenetic processes including dorsal closure and head involution, and die by the first instar larval stage. It may also be involved in fwe-mediated cellular competition. However, according to another report, it is not required for development or viability since mutants have no visible phenotype and are fertile. This is Zinc finger protein piragua from Drosophila melanogaster (Fruit fly).